Reading from the N-terminus, the 147-residue chain is 3-dehydroquinate dehydratase (147 aa).

Residue Tyr23 is the Proton acceptor of the active site. Substrate contacts are provided by Asn74, His80, and Asp87. His100 acts as the Proton donor in catalysis. Residues 101–102 (LS) and Arg111 contribute to the substrate site.

This sequence belongs to the type-II 3-dehydroquinase family. Homododecamer.

It carries out the reaction 3-dehydroquinate = 3-dehydroshikimate + H2O. It functions in the pathway metabolic intermediate biosynthesis; chorismate biosynthesis; chorismate from D-erythrose 4-phosphate and phosphoenolpyruvate: step 3/7. Its function is as follows. Catalyzes a trans-dehydration via an enolate intermediate. In Clostridium botulinum (strain Okra / Type B1), this protein is 3-dehydroquinate dehydratase.